We begin with the raw amino-acid sequence, 198 residues long: HTH-type transcriptional regulator BetI (198 aa).

Residues 8 to 68 (KIRRPQLVSA…ETMRDILRQL (61 aa)) enclose the HTH tetR-type domain. The segment at residues 31 to 50 (SVSLISQEAGVSSGIINHYF) is a DNA-binding region (H-T-H motif).

The protein operates within amine and polyamine biosynthesis; betaine biosynthesis via choline pathway [regulation]. Repressor involved in the biosynthesis of the osmoprotectant glycine betaine. It represses transcription of the choline transporter BetT and the genes of BetAB involved in the synthesis of glycine betaine. In Vibrio vulnificus (strain YJ016), this protein is HTH-type transcriptional regulator BetI.